The sequence spans 188 residues: ADP-ribosylation factor J (188 aa).

Residues 34–40, 75–79, and 134–137 contribute to the GTP site; these read DGAGKST, DVGGQ, and NKQD.

The protein belongs to the small GTPase superfamily. Arf family.

It localises to the golgi apparatus. GTP-binding protein that may be involved in protein trafficking. May modulate vesicle budding and uncoating within the Golgi apparatus. The protein is ADP-ribosylation factor J (arrJ) of Dictyostelium discoideum (Social amoeba).